Reading from the N-terminus, the 411-residue chain is Peptidyl-prolyl cis-trans isomerase (411 aa).

Ser-2 is subject to N-acetylserine. Disordered stretches follow at residues 54–127 and 160–302; these read IIKR…TLSP and NYVK…PKSK. Acidic residues predominate over residues 61–87; sequence FEDDDFLGGDFDEDEIDEESSEEEEEE. Phosphoserine occurs at positions 80 and 81. Position 89 is a phosphothreonine (Thr-89). Composition is skewed to acidic residues over residues 103–118 and 173–242; these read ESEDDEEDDDEDDEFQ and EGED…EEQK. The residue at position 184 (Tyr-184) is a Phosphotyrosine; by CK2. Residue Ser-186 is modified to Phosphoserine; by CK2. The span at 251 to 260 shows a compositional bias: basic residues; the sequence is KSKKEKKRKH. Positions 256–271 match the Nuclear localization signal motif; sequence KKRKHEEKEEEKKAKK. Over residues 261–296 the composition is skewed to basic and acidic residues; sequence EEKEEEKKAKKVKKVEFKKDLEEGPTKPKSKKEQDK. The PPIase FKBP-type domain maps to 324 to 411; the sequence is GARVGMRYIG…FDVKLVSMKN (88 aa).

Belongs to the FKBP-type PPIase family. FKBP3/4 subfamily. As to quaternary structure, interacts with NOP53. Post-translationally, phosphorylated at tyrosine and dephosphorylated by the phosphotyrosine-specific phosphoprotein phosphatase PTP1.

It is found in the nucleus. The protein resides in the nucleolus. The enzyme catalyses [protein]-peptidylproline (omega=180) = [protein]-peptidylproline (omega=0). With respect to regulation, inhibited by both FK506 and rapamycin. Functionally, proline isomerase that belongs to an abundant class of enzymes that catalyze the cis-trans isomerization of X-Pro peptide bonds and can accelerate the refolding of proline-containing polypeptides. Specifically binds nuclear localization sequences. May be involved in the assembly or folding of ribosomal proteins. The sequence is that of Peptidyl-prolyl cis-trans isomerase from Saccharomyces cerevisiae (strain ATCC 204508 / S288c) (Baker's yeast).